We begin with the raw amino-acid sequence, 374 residues long: Glutamate 5-kinase (374 aa).

Lysine 16 contributes to the ATP binding site. Serine 56, aspartate 143, and asparagine 155 together coordinate substrate. An ATP-binding site is contributed by 175 to 176 (TD). The PUA domain occupies 282 to 360 (RGRVVLDAGA…SEIEAVLGYV (79 aa)).

The protein belongs to the glutamate 5-kinase family.

The protein resides in the cytoplasm. The enzyme catalyses L-glutamate + ATP = L-glutamyl 5-phosphate + ADP. It participates in amino-acid biosynthesis; L-proline biosynthesis; L-glutamate 5-semialdehyde from L-glutamate: step 1/2. In terms of biological role, catalyzes the transfer of a phosphate group to glutamate to form L-glutamate 5-phosphate. The chain is Glutamate 5-kinase from Ralstonia pickettii (strain 12J).